The following is a 400-amino-acid chain: tRNA-specific 2-thiouridylase MnmA (400 aa).

ATP-binding positions include 19-26 (AMSGGVDS) and leucine 45. Cysteine 113 serves as the catalytic Nucleophile. Cysteines 113 and 210 form a disulfide. An ATP-binding site is contributed by glycine 137. The interval 160-162 (RDQ) is interaction with tRNA. Cysteine 210 acts as the Cysteine persulfide intermediate in catalysis.

The protein belongs to the MnmA/TRMU family.

The protein localises to the cytoplasm. It carries out the reaction S-sulfanyl-L-cysteinyl-[protein] + uridine(34) in tRNA + AH2 + ATP = 2-thiouridine(34) in tRNA + L-cysteinyl-[protein] + A + AMP + diphosphate + H(+). In terms of biological role, catalyzes the 2-thiolation of uridine at the wobble position (U34) of tRNA, leading to the formation of s(2)U34. The sequence is that of tRNA-specific 2-thiouridylase MnmA from Rhodopseudomonas palustris (strain BisA53).